The sequence spans 80 residues: Late cornified envelope protein 6A (80 aa).

The segment covering 1–10 (MSQQKQQSWK) has biased composition (polar residues). Disordered regions lie at residues 1 to 21 (MSQQ…SPPQ) and 35 to 60 (GAPH…ARQK).

This sequence belongs to the LCE family.

Its function is as follows. Precursors of the cornified envelope of the stratum corneum. The sequence is that of Late cornified envelope protein 6A (LCE6A) from Homo sapiens (Human).